The primary structure comprises 359 residues: Membrane-bound lytic murein transglycosylase C (359 aa).

A signal peptide spans 1-16; sequence MKKYLALALIAPLLIS. Cys-17 carries the N-palmitoyl cysteine lipid modification. Cys-17 is lipidated: S-diacylglycerol cysteine.

It belongs to the transglycosylase Slt family.

It is found in the cell outer membrane. The catalysed reaction is Exolytic cleavage of the (1-&gt;4)-beta-glycosidic linkage between N-acetylmuramic acid (MurNAc) and N-acetylglucosamine (GlcNAc) residues in peptidoglycan, from either the reducing or the non-reducing ends of the peptidoglycan chains, with concomitant formation of a 1,6-anhydrobond in the MurNAc residue.. Functionally, murein-degrading enzyme. May play a role in recycling of muropeptides during cell elongation and/or cell division. The protein is Membrane-bound lytic murein transglycosylase C of Shigella sonnei (strain Ss046).